Reading from the N-terminus, the 364-residue chain is UDP-N-acetylglucosamine--N-acetylmuramyl-(pentapeptide) pyrophosphoryl-undecaprenol N-acetylglucosamine transferase (364 aa).

Residues 16 to 18, Asn-128, Arg-166, Ser-195, Ile-249, and Gln-294 contribute to the UDP-N-acetyl-alpha-D-glucosamine site; that span reads TGG.

This sequence belongs to the glycosyltransferase 28 family. MurG subfamily.

Its subcellular location is the cell inner membrane. The catalysed reaction is di-trans,octa-cis-undecaprenyl diphospho-N-acetyl-alpha-D-muramoyl-L-alanyl-D-glutamyl-meso-2,6-diaminopimeloyl-D-alanyl-D-alanine + UDP-N-acetyl-alpha-D-glucosamine = di-trans,octa-cis-undecaprenyl diphospho-[N-acetyl-alpha-D-glucosaminyl-(1-&gt;4)]-N-acetyl-alpha-D-muramoyl-L-alanyl-D-glutamyl-meso-2,6-diaminopimeloyl-D-alanyl-D-alanine + UDP + H(+). It functions in the pathway cell wall biogenesis; peptidoglycan biosynthesis. Cell wall formation. Catalyzes the transfer of a GlcNAc subunit on undecaprenyl-pyrophosphoryl-MurNAc-pentapeptide (lipid intermediate I) to form undecaprenyl-pyrophosphoryl-MurNAc-(pentapeptide)GlcNAc (lipid intermediate II). The chain is UDP-N-acetylglucosamine--N-acetylmuramyl-(pentapeptide) pyrophosphoryl-undecaprenol N-acetylglucosamine transferase from Chromohalobacter salexigens (strain ATCC BAA-138 / DSM 3043 / CIP 106854 / NCIMB 13768 / 1H11).